A 249-amino-acid polypeptide reads, in one-letter code: Pyridoxine 5'-phosphate synthase (249 aa).

A 3-amino-2-oxopropyl phosphate-binding site is contributed by Asn-7. 9–10 (DH) contacts 1-deoxy-D-xylulose 5-phosphate. Residue Arg-18 coordinates 3-amino-2-oxopropyl phosphate. His-43 acts as the Proton acceptor in catalysis. 1-deoxy-D-xylulose 5-phosphate-binding residues include Arg-45 and His-50. The Proton acceptor role is filled by Glu-70. 1-deoxy-D-xylulose 5-phosphate is bound at residue Thr-100. Residue His-190 is the Proton donor of the active site. 3-amino-2-oxopropyl phosphate contacts are provided by residues Gly-191 and 212–213 (GH).

It belongs to the PNP synthase family. As to quaternary structure, homooctamer; tetramer of dimers.

It is found in the cytoplasm. It carries out the reaction 3-amino-2-oxopropyl phosphate + 1-deoxy-D-xylulose 5-phosphate = pyridoxine 5'-phosphate + phosphate + 2 H2O + H(+). Its pathway is cofactor biosynthesis; pyridoxine 5'-phosphate biosynthesis; pyridoxine 5'-phosphate from D-erythrose 4-phosphate: step 5/5. In terms of biological role, catalyzes the complicated ring closure reaction between the two acyclic compounds 1-deoxy-D-xylulose-5-phosphate (DXP) and 3-amino-2-oxopropyl phosphate (1-amino-acetone-3-phosphate or AAP) to form pyridoxine 5'-phosphate (PNP) and inorganic phosphate. This chain is Pyridoxine 5'-phosphate synthase, found in Synechococcus sp. (strain CC9311).